The sequence spans 607 residues: Elongation factor 4 (607 aa).

The tr-type G domain occupies Lys-11–Ser-193. Residues Asp-23–Thr-28 and Asn-140–Asp-143 contribute to the GTP site.

It belongs to the TRAFAC class translation factor GTPase superfamily. Classic translation factor GTPase family. LepA subfamily.

The protein resides in the cell membrane. The catalysed reaction is GTP + H2O = GDP + phosphate + H(+). Functionally, required for accurate and efficient protein synthesis under certain stress conditions. May act as a fidelity factor of the translation reaction, by catalyzing a one-codon backward translocation of tRNAs on improperly translocated ribosomes. Back-translocation proceeds from a post-translocation (POST) complex to a pre-translocation (PRE) complex, thus giving elongation factor G a second chance to translocate the tRNAs correctly. Binds to ribosomes in a GTP-dependent manner. This is Elongation factor 4 from Staphylococcus carnosus (strain TM300).